A 215-amino-acid chain; its full sequence is Ribose-5-phosphate isomerase A (215 aa).

Residues 26-29, 79-82, and 92-95 contribute to the substrate site; these read TGST, DGAD, and KGGG. Glutamate 101 (proton acceptor) is an active-site residue. Lysine 119 is a substrate binding site.

This sequence belongs to the ribose 5-phosphate isomerase family. As to quaternary structure, homodimer.

The catalysed reaction is aldehydo-D-ribose 5-phosphate = D-ribulose 5-phosphate. Its pathway is carbohydrate degradation; pentose phosphate pathway; D-ribose 5-phosphate from D-ribulose 5-phosphate (non-oxidative stage): step 1/1. In terms of biological role, catalyzes the reversible conversion of ribose-5-phosphate to ribulose 5-phosphate. The polypeptide is Ribose-5-phosphate isomerase A (Xanthomonas oryzae pv. oryzae (strain PXO99A)).